The primary structure comprises 1057 residues: Desmoglein-1-alpha (1057 aa).

An N-terminal signal peptide occupies residues 1 to 23 (MDWHSFRIAALLLTSLVVLEVNS). Positions 24–49 (EFQIQVRDHNAKNGTIKWHSIRRQKR) are excised as a propeptide. Cadherin domains lie at 50-157 (EWIK…PPVF), 158-269 (SMTT…IPYL), 270-389 (EQSS…RPGS), and 386-493 (RPGS…TGSE). Residues 50–564 (EWIKFAAACR…LYGDNVHFGP (515 aa)) are Extracellular-facing. N-linked (GlcNAc...) asparagine glycosylation is found at Asn110 and Asn180. Positions 490–552 (TGSESGGSSS…FQGDPDETLE (63 aa)) are disordered. A compositionally biased stretch (polar residues) spans 510–525 (NGYQGTSSTENPQRVT). A helical membrane pass occupies residues 565–585 (AGIGLLIMGFLVLGLVPFLLI). The Cytoplasmic segment spans residues 586–1057 (CCDCGGAPGG…TKYNTVQYSK (472 aa)). 5 Desmoglein repeat repeats span residues 832–858 (AYHS…TVRE), 859–888 (SYTT…ERVV), 889–918 (GPIS…ERVI), 919–946 (APGS…ERVI), and 947–975 (QPTS…ERVV).

Binds to JUP/plakoglobin. Interacts with PKP2. Interacts with DSC3; there is evidence to suggest that the interaction promotes cell-cell adhesion of keratinocytes. In terms of tissue distribution, expressed in testis.

The protein resides in the cell membrane. It localises to the cell junction. It is found in the desmosome. The protein localises to the cytoplasm. Its subcellular location is the nucleus. Component of intercellular desmosome junctions. Involved in the interaction of plaque proteins and intermediate filaments mediating cell-cell adhesion. The chain is Desmoglein-1-alpha (Dsg1a) from Mus musculus (Mouse).